The following is a 342-amino-acid chain: Ketol-acid reductoisomerase (NADP(+)) (342 aa).

Positions 2–182 (AKIYYDDDAD…GGLRAGGIET (181 aa)) constitute a KARI N-terminal Rossmann domain. NADP(+)-binding positions include 25-28 (YGSQ), Arg-48, Ser-51, Ser-53, and 83-86 (DQNQ). His-108 is an active-site residue. Gly-134 is an NADP(+) binding site. Positions 183–328 (SFREETETDL…KELRKMYSWL (146 aa)) constitute a KARI C-terminal knotted domain. Mg(2+) is bound by residues Asp-191, Glu-195, Glu-227, and Glu-231. Ser-252 contributes to the substrate binding site.

Belongs to the ketol-acid reductoisomerase family. Requires Mg(2+) as cofactor.

The catalysed reaction is (2R)-2,3-dihydroxy-3-methylbutanoate + NADP(+) = (2S)-2-acetolactate + NADPH + H(+). It carries out the reaction (2R,3R)-2,3-dihydroxy-3-methylpentanoate + NADP(+) = (S)-2-ethyl-2-hydroxy-3-oxobutanoate + NADPH + H(+). Its pathway is amino-acid biosynthesis; L-isoleucine biosynthesis; L-isoleucine from 2-oxobutanoate: step 2/4. The protein operates within amino-acid biosynthesis; L-valine biosynthesis; L-valine from pyruvate: step 2/4. Involved in the biosynthesis of branched-chain amino acids (BCAA). Catalyzes an alkyl-migration followed by a ketol-acid reduction of (S)-2-acetolactate (S2AL) to yield (R)-2,3-dihydroxy-isovalerate. In the isomerase reaction, S2AL is rearranged via a Mg-dependent methyl migration to produce 3-hydroxy-3-methyl-2-ketobutyrate (HMKB). In the reductase reaction, this 2-ketoacid undergoes a metal-dependent reduction by NADPH to yield (R)-2,3-dihydroxy-isovalerate. The protein is Ketol-acid reductoisomerase (NADP(+)) of Cutibacterium acnes (strain DSM 16379 / KPA171202) (Propionibacterium acnes).